The chain runs to 447 residues: Exodeoxyribonuclease 7 large subunit (447 aa).

The protein belongs to the XseA family. As to quaternary structure, heterooligomer composed of large and small subunits.

It is found in the cytoplasm. It carries out the reaction Exonucleolytic cleavage in either 5'- to 3'- or 3'- to 5'-direction to yield nucleoside 5'-phosphates.. Bidirectionally degrades single-stranded DNA into large acid-insoluble oligonucleotides, which are then degraded further into small acid-soluble oligonucleotides. This Lactobacillus helveticus (strain DPC 4571) protein is Exodeoxyribonuclease 7 large subunit.